We begin with the raw amino-acid sequence, 270 residues long: uncharacterized protein (270 aa).

Residues 1 to 37 are Cytoplasmic-facing; that stretch reads MATHTSKRRIHRWENNELSEENSTIIYFPARGLMWTH. Residues 38 to 58 traverse the membrane as a helical segment; sequence FPFVLGICLEFVGYVLKIVFI. At 59–65 the chain is on the extracellular side; that stretch reads NSPSIST. A helical transmembrane segment spans residues 66 to 86; that stretch reads FIAQSVLLLIAPSLYALSIFM. The Cytoplasmic portion of the chain corresponds to 87-93; the sequence is LFSKMAR. A helical transmembrane segment spans residues 94–114; sequence LILMEAYMLIPAKFSTVSFVV. Over 115 to 140 the chain is Extracellular; that stretch reads ADMIGRVLQAVGGGLLSSWNSRNTGR. A helical membrane pass occupies residues 141–161; sequence ILIIVGLFIQIFCYTFLTFSQ. The Cytoplasmic portion of the chain corresponds to 162–181; it reads LFLHYKMKATPSKIVRDSNE. The chain crosses the membrane as a helical span at residues 182–202; that stretch reads WFQYNFILLAGILLVNGRTIV. Over 203 to 220 the chain is Extracellular; it reads RVVQFLMGLQSYIGQHEW. Residues 221–241 traverse the membrane as a helical segment; it reads CLYVFDTVLMFLLPLIFLATF. Topologically, residues 242 to 270 are cytoplasmic; it reads RARNLFKLQDKSVNIQLNKLLDKESVSED.

It belongs to the lipid-translocating exporter (LTE) (TC 9.A.26.1) family.

Its subcellular location is the membrane. This is an uncharacterized protein from Saccharomyces cerevisiae (strain ATCC 204508 / S288c) (Baker's yeast).